Consider the following 800-residue polypeptide: Nucleolar RNA helicase 2-B (800 aa).

The segment covering 1–14 has biased composition (basic and acidic residues); that stretch reads MPGKVYTDEMEGKS. The disordered stretch occupies residues 1-200; sequence MPGKVYTDEM…TDTSEITAAN (200 aa). A compositionally biased stretch (polar residues) spans 114 to 124; sequence ETNISLSSQGG. The short motif at 221 to 249 is the Q motif element; the sequence is GDFSKFPISKDTIKNLQAKGVTYLFPIQS. Positions 252 to 431 constitute a Helicase ATP-binding domain; that stretch reads FHTVYSGKDV…KKYMRKQYEK (180 aa). 265–272 contributes to the ATP binding site; sequence ARTGTGKT. Positions 374–377 match the DEAD box motif; it reads DEVD. The 157-residue stretch at 464–620 folds into the Helicase C-terminal domain; sequence DIVQVYSGSH…SSADAIKSLD (157 aa). The interval 750 to 800 is disordered; that stretch reads IQESERSFDGPRNRSFGGRGRRPFDRRNNSRNSSGGGGGRRGRSGGFRRGR. A compositionally biased stretch (basic and acidic residues) spans 752–761; it reads ESERSFDGPR. Residues 789–800 show a composition bias toward basic residues; it reads RRGRSGGFRRGR.

Belongs to the DEAD box helicase family. DDX21/DDX50 subfamily. As to expression, widely expressed. Expressed at higher level in stomach. Expressed at lower level compared to ddx21-a.

The protein localises to the nucleus. It localises to the nucleolus. The protein resides in the nucleoplasm. Its subcellular location is the cytoplasm. It is found in the cytosol. The protein localises to the mitochondrion. It catalyses the reaction ATP + H2O = ADP + phosphate + H(+). In terms of biological role, RNA helicase that acts as a sensor of the transcriptional status of both RNA polymerase (Pol) I and II: promotes ribosomal RNA (rRNA) processing and transcription from polymerase II (Pol II). Binds various RNAs, such as rRNAs, snoRNAs, 7SK and, at lower extent, mRNAs. In the nucleolus, localizes to rDNA locus, where it directly binds rRNAs and snoRNAs, and promotes rRNA transcription, processing and modification. Required for rRNA 2'-O-methylation, possibly by promoting the recruitment of late-acting snoRNAs SNORD56 and SNORD58 with pre-ribosomal complexes. In the nucleoplasm, binds 7SK RNA and is recruited to the promoters of Pol II-transcribed genes: acts by facilitating the release of P-TEFb from inhibitory 7SK snRNP in a manner that is dependent on its helicase activity, thereby promoting transcription of its target genes. Required to prevent R-loop-associated DNA damage and transcription-associated genomic instability. The chain is Nucleolar RNA helicase 2-B (ddx21-b) from Xenopus laevis (African clawed frog).